The sequence spans 466 residues: Ribulose bisphosphate carboxylase large chain (466 aa).

The residue at position 5 (K5) is an N6,N6,N6-trimethyllysine. Substrate contacts are provided by N114 and T164. The active-site Proton acceptor is K166. K168 serves as a coordination point for substrate. Mg(2+)-binding residues include K192, D194, and E195. Residue K192 is modified to N6-carboxylysine. The active-site Proton acceptor is H285. Substrate contacts are provided by R286, H318, and S370.

It belongs to the RuBisCO large chain family. Type I subfamily. Heterohexadecamer of 8 large chains and 8 small chains; disulfide-linked. The disulfide link is formed within the large subunit homodimers. The cofactor is Mg(2+). Post-translationally, the disulfide bond which can form in the large chain dimeric partners within the hexadecamer appears to be associated with oxidative stress and protein turnover.

Its subcellular location is the plastid. The protein resides in the chloroplast. It catalyses the reaction 2 (2R)-3-phosphoglycerate + 2 H(+) = D-ribulose 1,5-bisphosphate + CO2 + H2O. The enzyme catalyses D-ribulose 1,5-bisphosphate + O2 = 2-phosphoglycolate + (2R)-3-phosphoglycerate + 2 H(+). RuBisCO catalyzes two reactions: the carboxylation of D-ribulose 1,5-bisphosphate, the primary event in carbon dioxide fixation, as well as the oxidative fragmentation of the pentose substrate in the photorespiration process. Both reactions occur simultaneously and in competition at the same active site. In Drosera peltata (Pale sundew), this protein is Ribulose bisphosphate carboxylase large chain.